We begin with the raw amino-acid sequence, 336 residues long: Ferredoxin--NADP reductase 1 (336 aa).

Residues Glu-37, Lys-45, Phe-50, Val-90, Leu-125, Asp-287, and Thr-328 each coordinate FAD.

Belongs to the ferredoxin--NADP reductase type 2 family. Homodimer. It depends on FAD as a cofactor.

The catalysed reaction is 2 reduced [2Fe-2S]-[ferredoxin] + NADP(+) + H(+) = 2 oxidized [2Fe-2S]-[ferredoxin] + NADPH. The sequence is that of Ferredoxin--NADP reductase 1 from Bacillus velezensis (strain DSM 23117 / BGSC 10A6 / LMG 26770 / FZB42) (Bacillus amyloliquefaciens subsp. plantarum).